We begin with the raw amino-acid sequence, 138 residues long: Small ribosomal subunit protein uS11 (138 aa).

Low complexity predominate over residues 1-12 (MPPKKAAASSAK). Residues 1-28 (MPPKKAAASSAKKGQKTRRREKKNVPHG) are disordered. Residues 13–22 (KGQKTRRREK) show a composition bias toward basic residues.

It belongs to the universal ribosomal protein uS11 family. In terms of assembly, part of the 30S ribosomal subunit. Interacts with proteins S7 and S18. Binds to IF-3.

Its function is as follows. Located on the platform of the 30S subunit, it bridges several disparate RNA helices of the 16S rRNA. Forms part of the Shine-Dalgarno cleft in the 70S ribosome. The polypeptide is Small ribosomal subunit protein uS11 (Mycobacterium sp. (strain JLS)).